A 413-amino-acid chain; its full sequence is Alpha-ketoglutarate-dependent xanthine dioxygenase xan1 (413 aa).

Residues 1-18 (MSATATTTVVEPPTTTLT) show a composition bias toward low complexity. The tract at residues 1–24 (MSATATTTVVEPPTTTLTGATEPP) is disordered. Fe cation-binding residues include His-183 and Asp-185. 2-oxoglutarate contacts are provided by Thr-228 and Trp-362. Residue His-377 participates in Fe cation binding. Arg-389 is a binding site for 2-oxoglutarate.

Belongs to the TfdA dioxygenase family. Fe(2+) serves as cofactor.

The protein resides in the cytoplasm. It localises to the cytosol. It catalyses the reaction xanthine + 2-oxoglutarate + O2 = urate + succinate + CO2. Functionally, alpha-ketoglutarate-dependent xanthine dioxygenase is a non-heme mononuclear Fe(2+) enzyme that decarboxylates alpha-ketoglutarate to succinate and CO(2) while hydroxylating xanthine to generate uric acid. Allows xanthine utilization as a nitrogen source. The polypeptide is Alpha-ketoglutarate-dependent xanthine dioxygenase xan1 (xan1) (Schizosaccharomyces pombe (strain 972 / ATCC 24843) (Fission yeast)).